Here is a 246-residue protein sequence, read N- to C-terminus: Bis(5'-nucleosyl)-tetraphosphatase PrpE [asymmetrical] (246 aa).

This sequence belongs to the PrpE family. Ni(2+) serves as cofactor.

It catalyses the reaction P(1),P(4)-bis(5'-guanosyl) tetraphosphate + H2O = GMP + GTP + 2 H(+). Its function is as follows. Asymmetrically hydrolyzes Ap4p to yield AMP and ATP. The sequence is that of Bis(5'-nucleosyl)-tetraphosphatase PrpE [asymmetrical] from Bacillus cereus (strain ATCC 10987 / NRS 248).